The following is a 782-amino-acid chain: Hypersensitive to pore-forming toxin protein 40 (782 aa).

Residues 138–203 (ESEIVPGAMY…TLFVSDQFSI (66 aa)) enclose the Tudor; degenerate domain. Composition is skewed to polar residues over residues 332–346 (SVNP…SSSM) and 413–443 (FEST…STIQ). Disordered regions lie at residues 332 to 351 (SVNP…DCPY), 413 to 448 (FEST…NEED), 472 to 492 (IERP…NMSE), and 617 to 672 (VAQG…LEDP). A compositionally biased stretch (polar residues) spans 617-634 (VAQGSNAPKTAPNDSVNS). Basic and acidic residues predominate over residues 638–662 (DDIHETDKRGNHCKSVTEDPKDNKD).

The protein localises to the cytoplasm. Its subcellular location is the perinuclear region. The sequence is that of Hypersensitive to pore-forming toxin protein 40 from Caenorhabditis elegans.